A 303-amino-acid chain; its full sequence is Proline dehydrogenase 2 (303 aa).

Lys-96 contributes to the substrate binding site. Residue Asp-130 is part of the active site. 2 residues coordinate FAD: Met-131 and Gln-159. Arg-180 is a catalytic residue. FAD-binding positions include 183 to 185 and 222 to 223; these read KGA and TH. A substrate-binding site is contributed by 284 to 285; that stretch reads RR.

Belongs to the proline dehydrogenase family. FAD serves as cofactor.

The enzyme catalyses L-proline + a quinone = (S)-1-pyrroline-5-carboxylate + a quinol + H(+). It functions in the pathway amino-acid degradation; L-proline degradation into L-glutamate; L-glutamate from L-proline: step 1/2. Functionally, converts proline to delta-1-pyrroline-5-carboxylate. Important for the use of proline as a sole carbon and energy source or a sole nitrogen source. The protein is Proline dehydrogenase 2 of Bacillus subtilis (strain 168).